Reading from the N-terminus, the 90-residue chain is uncharacterized protein (90 aa).

This is an uncharacterized protein from Methanocaldococcus jannaschii (strain ATCC 43067 / DSM 2661 / JAL-1 / JCM 10045 / NBRC 100440) (Methanococcus jannaschii).